A 191-amino-acid polypeptide reads, in one-letter code: GTP-binding protein CIN4 (191 aa).

GTP is bound by residues 23–30 (GLDNSGKS), 69–73 (DIGGQ), and 131–134 (NKID).

Its function is as follows. Implicated in yeast microtubule function. In Saccharomyces cerevisiae (strain ATCC 204508 / S288c) (Baker's yeast), this protein is GTP-binding protein CIN4 (CIN4).